The primary structure comprises 571 residues: Proline--tRNA ligase (571 aa).

This sequence belongs to the class-II aminoacyl-tRNA synthetase family. ProS type 1 subfamily. Homodimer.

It is found in the cytoplasm. It carries out the reaction tRNA(Pro) + L-proline + ATP = L-prolyl-tRNA(Pro) + AMP + diphosphate. In terms of biological role, catalyzes the attachment of proline to tRNA(Pro) in a two-step reaction: proline is first activated by ATP to form Pro-AMP and then transferred to the acceptor end of tRNA(Pro). As ProRS can inadvertently accommodate and process non-cognate amino acids such as alanine and cysteine, to avoid such errors it has two additional distinct editing activities against alanine. One activity is designated as 'pretransfer' editing and involves the tRNA(Pro)-independent hydrolysis of activated Ala-AMP. The other activity is designated 'posttransfer' editing and involves deacylation of mischarged Ala-tRNA(Pro). The misacylated Cys-tRNA(Pro) is not edited by ProRS. This is Proline--tRNA ligase from Acinetobacter baumannii (strain AB307-0294).